The following is a 455-amino-acid chain: Protein king tubby (455 aa).

Positions R35 to S92 are disordered. Residues L67–S92 are compositionally biased toward low complexity. Phosphoserine is present on S144.

It belongs to the TUB family.

Its subcellular location is the cytoplasm. The protein localises to the nucleus. It is found in the cell projection. It localises to the cilium membrane. The protein resides in the rhabdomere. The chain is Protein king tubby from Drosophila virilis (Fruit fly).